The following is a 415-amino-acid chain: Putative ankyrin repeat protein FPV034 (415 aa).

10 ANK repeats span residues 12–41 (ICIKLLEQAIELKDYIVVRMILNQQENINT), 43–72 (KHFNMLRKAVLNHDHNLVNIFIDKNFNINI), 76–105 (VGYTLLRYAVEVDDVNIAKILLDAGSIINK), 107–135 (DYRLLHSAITHENKKMIELLCLHGININV), 139–168 (KGYTALYYTICNNNYDMVCFLLEKNADISI), 170–200 (NKYSMLHFLSTSNKYHNVMAVLLDKGIDVNI), 203–232 (HVKAPIHVAVERNNIYGTMLLINRNADVNI), 237–266 (GGRTSLHLAIKERNYEAAFVLINNGANVDS), 270–299 (VGNTPIFIAASLQDVRFMKLLLDNGADINV), and 303–332 (FGETPVNMVITGGSKEVTQYTVSYLISLKV).

The chain is Putative ankyrin repeat protein FPV034 (ANK2) from Fowlpox virus (strain NVSL) (FPV).